The sequence spans 351 residues: Probable cobalt-factor III C(17)-methyltransferase (351 aa).

It belongs to the precorrin methyltransferase family.

The catalysed reaction is Co(II)-factor III + S-adenosyl-L-methionine + H(+) = Co(II)-factor IV + S-adenosyl-L-homocysteine. It functions in the pathway cofactor biosynthesis; adenosylcobalamin biosynthesis; cob(II)yrinate a,c-diamide from sirohydrochlorin (anaerobic route): step 3/10. Its function is as follows. Methyltransferase that likely catalyzes the ring contraction and methylation of C-17 in cobalt-factor III to form cobalt-factor IV. May also convert cobalt-precorrin-3 to cobalt-precorrin-4. This chain is Probable cobalt-factor III C(17)-methyltransferase (cbiH), found in Methanothermobacter thermautotrophicus (strain ATCC 29096 / DSM 1053 / JCM 10044 / NBRC 100330 / Delta H) (Methanobacterium thermoautotrophicum).